The primary structure comprises 239 residues: Ureidoacrylate amidohydrolase RutB (239 aa).

The active-site Proton acceptor is the Asp-35. The active site involves Lys-144. The Nucleophile role is filled by Cys-177.

The protein belongs to the isochorismatase family. RutB subfamily.

It catalyses the reaction (Z)-3-ureidoacrylate + H2O + H(+) = (Z)-3-aminoacrylate + NH4(+) + CO2. The enzyme catalyses (Z)-3-ureidoacrylate + H2O = (Z)-3-aminoacrylate + carbamate + H(+). The catalysed reaction is (Z)-2-methylureidoacrylate + H2O + H(+) = (Z)-2-methylaminoacrylate + NH4(+) + CO2. Its function is as follows. Hydrolyzes ureidoacrylate to form aminoacrylate and carbamate. The carbamate hydrolyzes spontaneously, thereby releasing one of the nitrogen atoms of the pyrimidine ring as ammonia and one of its carbon atoms as CO2. This is Ureidoacrylate amidohydrolase RutB from Caulobacter segnis (strain ATCC 21756 / DSM 7131 / JCM 7823 / NBRC 15250 / LMG 17158 / TK0059) (Mycoplana segnis).